The chain runs to 317 residues: Homoserine O-succinyltransferase (317 aa).

The active-site Acyl-thioester intermediate is the Cys142. The substrate site is built by Lys163 and Ser192. His235 functions as the Proton acceptor in the catalytic mechanism. The active site involves Glu237. Arg249 serves as a coordination point for substrate.

This sequence belongs to the MetA family.

The protein resides in the cytoplasm. The catalysed reaction is L-homoserine + succinyl-CoA = O-succinyl-L-homoserine + CoA. The protein operates within amino-acid biosynthesis; L-methionine biosynthesis via de novo pathway; O-succinyl-L-homoserine from L-homoserine: step 1/1. In terms of biological role, transfers a succinyl group from succinyl-CoA to L-homoserine, forming succinyl-L-homoserine. This chain is Homoserine O-succinyltransferase, found in Aeromonas hydrophila subsp. hydrophila (strain ATCC 7966 / DSM 30187 / BCRC 13018 / CCUG 14551 / JCM 1027 / KCTC 2358 / NCIMB 9240 / NCTC 8049).